A 598-amino-acid polypeptide reads, in one-letter code: Elongation factor 4 (598 aa).

One can recognise a tr-type G domain in the interval 2-183 (KNIRNFCIIA…AIINRVPAPS (182 aa)). Residues 14–19 (DHGKST) and 130–133 (NKVD) contribute to the GTP site.

The protein belongs to the TRAFAC class translation factor GTPase superfamily. Classic translation factor GTPase family. LepA subfamily.

It is found in the cell inner membrane. It catalyses the reaction GTP + H2O = GDP + phosphate + H(+). In terms of biological role, required for accurate and efficient protein synthesis under certain stress conditions. May act as a fidelity factor of the translation reaction, by catalyzing a one-codon backward translocation of tRNAs on improperly translocated ribosomes. Back-translocation proceeds from a post-translocation (POST) complex to a pre-translocation (PRE) complex, thus giving elongation factor G a second chance to translocate the tRNAs correctly. Binds to ribosomes in a GTP-dependent manner. The polypeptide is Elongation factor 4 (Christiangramia forsetii (strain DSM 17595 / CGMCC 1.15422 / KT0803) (Gramella forsetii)).